The following is a 2263-amino-acid chain: Collagen alpha-6(VI) chain (2263 aa).

Residues 1-19 (MMLLILFLVIICSHISVNQ) form the signal peptide. The interval 20–1391 (DSGPEYADVV…TCCCLFCKCI (1372 aa)) is nonhelical region. VWFA domains follow at residues 27-206 (DVVF…IKDV), 229-411 (DVVF…RNQI), 436-606 (DIYL…RNQV), 622-791 (DIMF…EDDL), and 809-982 (DVVF…FSDV). N-linked (GlcNAc...) asparagine glycosylation is found at asparagine 198, asparagine 275, asparagine 288, asparagine 347, and asparagine 520. Asparagine 930 and asparagine 988 each carry an N-linked (GlcNAc...) asparagine glycan. VWFA domains follow at residues 1000–1171 (DLVF…NKRI) and 1187–1371 (DVVV…GSRL). N-linked (GlcNAc...) asparagine glycosylation occurs at asparagine 1290. The interval 1392–1725 (GGDGTMGDPG…GRKGVKGAKG (334 aa)) is triple-helical region. A disordered region spans residues 1397 to 1723 (MGDPGPPGKR…PPGRKGVKGA (327 aa)). Positions 1498 to 1508 (TPGDRGAKGLR) are enriched in basic and acidic residues. The short motif at 1508 to 1510 (RGD) is the Cell attachment site element. A compositionally biased stretch (basic residues) spans 1547-1559 (SRRKTAAHGRRGH). Positions 1680–1689 (GDPGGPGETG) are enriched in gly residues. The interval 1726–2263 (LASFSTCELI…MIESAPKQHD (538 aa)) is nonhelical region. 2 VWFA domains span residues 1757–1937 (ELVF…ERLQ) and 1965–2166 (DAAF…INSI).

The protein belongs to the type VI collagen family. As to quaternary structure, trimers composed of three different chains: alpha-1(VI), alpha-2(VI), and alpha-3(VI) or alpha-5(VI) or alpha-6(VI). In terms of processing, prolines at the third position of the tripeptide repeating unit (G-X-Y) are hydroxylated in some or all of the chains.

It localises to the secreted. Its subcellular location is the extracellular space. The protein localises to the extracellular matrix. Its function is as follows. Collagen VI acts as a cell-binding protein. This is Collagen alpha-6(VI) chain (COL6A6) from Homo sapiens (Human).